The chain runs to 33 residues: Brevinin-2GRb (33 aa).

As to expression, expressed by the skin glands.

The protein localises to the secreted. Its function is as follows. Antimicrobial peptide active against the Gram-positive bacterium S.aureus (MIC=25 uM) and against the Gram-negative bacteria E.coli (MIC=6 uM). Has no antifungal activity against C.albicans. Shows hemolytic activity against human erythrocytes only at high concentrations (LC(50)=180 uM). In Odorrana grahami (Yunnanfu frog), this protein is Brevinin-2GRb.